A 174-amino-acid chain; its full sequence is Small ribosomal subunit protein uS5 (174 aa).

Residues 18 to 81 (LKDRLVSVNR…EDAKKNLVKI (64 aa)) form the S5 DRBM domain.

The protein belongs to the universal ribosomal protein uS5 family. In terms of assembly, part of the 30S ribosomal subunit. Contacts proteins S4 and S8.

Its function is as follows. With S4 and S12 plays an important role in translational accuracy. In terms of biological role, located at the back of the 30S subunit body where it stabilizes the conformation of the head with respect to the body. The polypeptide is Small ribosomal subunit protein uS5 (Flavobacterium psychrophilum (strain ATCC 49511 / DSM 21280 / CIP 103535 / JIP02/86)).